Here is a 78-residue protein sequence, read N- to C-terminus: MLILTRRPGESLYLGDTIKITVLSVQGKQIKIGLDVPGDMTVYREEVYMRVRDQNRQALETSDADLLAATQLWHAKKK.

It belongs to the CsrA/RsmA family. Homodimer; the beta-strands of each monomer intercalate to form a hydrophobic core, while the alpha-helices form wings that extend away from the core.

Its subcellular location is the cytoplasm. In terms of biological role, a translational regulator that binds mRNA to regulate translation initiation and/or mRNA stability. Usually binds in the 5'-UTR at or near the Shine-Dalgarno sequence preventing ribosome-binding, thus repressing translation. Its main target seems to be the major flagellin gene, while its function is anatagonized by FliW. The chain is Translational regulator CsrA from Oleidesulfovibrio alaskensis (strain ATCC BAA-1058 / DSM 17464 / G20) (Desulfovibrio alaskensis).